The sequence spans 362 residues: NAD(P)H-quinone oxidoreductase subunit 1, chloroplastic (362 aa).

8 helical membrane-spanning segments follow: residues 29-49 (ILPI…IVWL), 103-123 (IAVI…HFVL), 128-148 (IGVF…LMAG), 164-184 (AAQS…ISLL), 202-222 (FFGW…ISSL), 247-267 (YSGI…LVSS), 303-323 (TMGI…SITI), and 335-355 (LLNL…LLTT).

Belongs to the complex I subunit 1 family. NDH is composed of at least 16 different subunits, 5 of which are encoded in the nucleus.

Its subcellular location is the plastid. The protein localises to the chloroplast thylakoid membrane. The enzyme catalyses a plastoquinone + NADH + (n+1) H(+)(in) = a plastoquinol + NAD(+) + n H(+)(out). It carries out the reaction a plastoquinone + NADPH + (n+1) H(+)(in) = a plastoquinol + NADP(+) + n H(+)(out). Its function is as follows. NDH shuttles electrons from NAD(P)H:plastoquinone, via FMN and iron-sulfur (Fe-S) centers, to quinones in the photosynthetic chain and possibly in a chloroplast respiratory chain. The immediate electron acceptor for the enzyme in this species is believed to be plastoquinone. Couples the redox reaction to proton translocation, and thus conserves the redox energy in a proton gradient. The protein is NAD(P)H-quinone oxidoreductase subunit 1, chloroplastic of Triticum aestivum (Wheat).